The primary structure comprises 239 residues: Phosducin-like protein 2 (239 aa).

The stretch at 26–87 forms a coiled coil; that stretch reads TEDELFDLIK…IQQMKVEAEL (62 aa). The Phosducin domain maps to 36–196; that stretch reads EAAEMATEAE…TTVNDIEWQL (161 aa). Over residues 42–59 the composition is skewed to basic and acidic residues; the sequence is TEAEKNEKLENASLKDLK. Disordered stretches follow at residues 42-64 and 212-239; these read TEAEKNEKLENASLKDLKDMEDD and ITLARKKSQKSRYSKADSDESDNSDSDD. The tract at residues 90–239 is thioredoxin fold; sequence FGELKEISEP…DESDNSDSDD (150 aa). The span at 214-224 shows a compositional bias: basic residues; sequence LARKKSQKSRY. The segment covering 230 to 239 has biased composition (acidic residues); it reads DESDNSDSDD.

The protein belongs to the phosducin family.

This chain is Phosducin-like protein 2 (phlp2), found in Dictyostelium discoideum (Social amoeba).